Consider the following 361-residue polypeptide: Phospho-N-acetylmuramoyl-pentapeptide-transferase (361 aa).

The next 10 membrane-spanning stretches (helical) occupy residues 28–48, 73–93, 97–117, 134–154, 168–188, 200–220, 237–257, 264–284, 289–309, and 338–358; these read LAALTALSISFLIGPAMIRSL, TMGGALILMAVIITTLLWADL, YIWLVLLTTLGFGAIGWVDDY, FFWQSIIALLVAVYLAMTAEL, VAIPLGSFLFIILTYLVIVGS, GLAIMPTVMISGALAIFAYVA, AGELAVFCGALAGAGLAFLWF, VFMGDVGALALGAALGVITVI, IVLVIMGGVFVMEALSVMIQV, and QVVVRFWIITIILVLIGLSTL.

Belongs to the glycosyltransferase 4 family. MraY subfamily. The cofactor is Mg(2+).

Its subcellular location is the cell inner membrane. The enzyme catalyses UDP-N-acetyl-alpha-D-muramoyl-L-alanyl-gamma-D-glutamyl-meso-2,6-diaminopimeloyl-D-alanyl-D-alanine + di-trans,octa-cis-undecaprenyl phosphate = di-trans,octa-cis-undecaprenyl diphospho-N-acetyl-alpha-D-muramoyl-L-alanyl-D-glutamyl-meso-2,6-diaminopimeloyl-D-alanyl-D-alanine + UMP. It functions in the pathway cell wall biogenesis; peptidoglycan biosynthesis. In terms of biological role, catalyzes the initial step of the lipid cycle reactions in the biosynthesis of the cell wall peptidoglycan: transfers peptidoglycan precursor phospho-MurNAc-pentapeptide from UDP-MurNAc-pentapeptide onto the lipid carrier undecaprenyl phosphate, yielding undecaprenyl-pyrophosphoryl-MurNAc-pentapeptide, known as lipid I. This Nitrosomonas eutropha (strain DSM 101675 / C91 / Nm57) protein is Phospho-N-acetylmuramoyl-pentapeptide-transferase.